A 233-amino-acid polypeptide reads, in one-letter code: Segregation and condensation protein A (233 aa).

It belongs to the ScpA family. As to quaternary structure, component of a cohesin-like complex composed of ScpA, ScpB and the Smc homodimer, in which ScpA and ScpB bind to the head domain of Smc. The presence of the three proteins is required for the association of the complex with DNA.

It is found in the cytoplasm. Functionally, participates in chromosomal partition during cell division. May act via the formation of a condensin-like complex containing Smc and ScpB that pull DNA away from mid-cell into both cell halves. The sequence is that of Segregation and condensation protein A from Streptococcus pyogenes serotype M1.